We begin with the raw amino-acid sequence, 461 residues long: Propanal dehydrogenase (CoA-propanoylating) (461 aa).

The interval M1–L18 is targets protein to the BMC.

It belongs to the EutE/PduP family. As to quaternary structure, interacts with PduK, probably with its BMC-containing N-terminus. Interacts with shell proteins PduA and PduJ, interacts with PduQ.

Its subcellular location is the bacterial microcompartment. The catalysed reaction is propanal + NAD(+) + CoA = propanoyl-CoA + NADH + H(+). Its pathway is polyol metabolism; 1,2-propanediol degradation. Functionally, a CoA-acylating aldehyde dehydrogenase required for optimal 1,2-propanediol (1,2-PD) degradation. Optimizes growth in the bacterial microcompartment (BMC) dedicated to 1,2-PD degradation by minimizing propionaldehyde toxicity. NAD(+) and NADH are regenerated internally within the Pdu BMC by the PduP and PduQ enzymes, which reduce NAD(+) and oxidize NADH respectively, although there must also be cofactor transport across the BMC. Directly targeted to the BMC. Its function is as follows. Expression of a cosmid containing the full 21-gene pdu operon in E.coli allows E.coli to grow on 1,2-propanediol (1,2-PD) with the appearance of bacterial microcompartments (BMC) in its cytoplasm. In terms of biological role, the 1,2-PD-specific bacterial microcompartment (BMC) concentrates low levels of 1,2-PD catabolic enzymes, concentrates volatile reaction intermediates thus enhancing pathway flux and keeps the level of toxic, mutagenic propionaldehyde low. The chain is Propanal dehydrogenase (CoA-propanoylating) from Citrobacter freundii.